A 116-amino-acid chain; its full sequence is Large ribosomal subunit protein uL18 (116 aa).

It belongs to the universal ribosomal protein uL18 family. In terms of assembly, part of the 50S ribosomal subunit; part of the 5S rRNA/L5/L18/L25 subcomplex. Contacts the 5S and 23S rRNAs.

Functionally, this is one of the proteins that bind and probably mediate the attachment of the 5S RNA into the large ribosomal subunit, where it forms part of the central protuberance. This is Large ribosomal subunit protein uL18 from Pseudomonas fluorescens (strain SBW25).